The sequence spans 371 residues: Cytochrome b (371 aa).

4 consecutive transmembrane segments (helical) span residues 25–45 (FGSMLLACSSMQVLTGFFLAV), 69–90 (WMMQNLHAIGASMFFICIYIHI), 105–125 (WLSGTTLLIMLMATAXXXXXX), and 170–190 (XXXXXXILPFGIISLSSLHIM). 2 residues coordinate heme b: histidine 75 and histidine 89. Positions 174 and 188 each coordinate heme b. Histidine 193 contacts a ubiquinone. The next 4 membrane-spanning stretches (helical) occupy residues 218-238 (YKDLLMLSLMVLTLLMTVSFL), 280-300 (LGGALALAMSIMILLTTPFTH), 312-332 (IMQLMFWTLVATFVVITWAAT), and 339-358 (FTMISQVASTMYFLFFITNP).

The protein belongs to the cytochrome b family. As to quaternary structure, the cytochrome bc1 complex contains 3 respiratory subunits (MT-CYB, CYC1 and UQCRFS1), 2 core proteins (UQCRC1 and UQCRC2) and probably 6 low-molecular weight proteins. Heme b serves as cofactor.

It localises to the mitochondrion inner membrane. Component of the ubiquinol-cytochrome c reductase complex (complex III or cytochrome b-c1 complex) that is part of the mitochondrial respiratory chain. The b-c1 complex mediates electron transfer from ubiquinol to cytochrome c. Contributes to the generation of a proton gradient across the mitochondrial membrane that is then used for ATP synthesis. This chain is Cytochrome b (MT-CYB), found in Eryx jaculus (Javelin sand boa).